The sequence spans 130 residues: Large ribosomal subunit protein bL20 (130 aa).

Belongs to the bacterial ribosomal protein bL20 family.

Binds directly to 23S ribosomal RNA and is necessary for the in vitro assembly process of the 50S ribosomal subunit. It is not involved in the protein synthesizing functions of that subunit. This is Large ribosomal subunit protein bL20 from Salinispora tropica (strain ATCC BAA-916 / DSM 44818 / JCM 13857 / NBRC 105044 / CNB-440).